Reading from the N-terminus, the 146-residue chain is Mu-like prophage FluMu G protein 1 (146 aa).

It to phage Mu protein G.

The sequence is that of Mu-like prophage FluMu G protein 1 from Haemophilus influenzae (strain ATCC 51907 / DSM 11121 / KW20 / Rd).